Reading from the N-terminus, the 1444-residue chain is ABC transporter G family member 39 (1444 aa).

The tract at residues 1 to 36 (MDIVRMGSVASGGGSVRRTASSWRGTSGRSDAFGRS) is disordered. Polar residues predominate over residues 19-29 (TASSWRGTSGR). The region spanning 154 to 426 (LSAMRIVSSG…FEAMGFKCPE (273 aa)) is the ABC transporter 1 domain. ATP is bound at residue 187–194 (GPPGSGKT). The 214-residue stretch at 504–717 (ELTKACFSRE…AQNAIAVNEF (214 aa)) folds into the ABC transmembrane type-2 1 domain. The next 6 membrane-spanning stretches (helical) occupy residues 522 to 542 (FVYIFKILQLIILGSIGMTVF), 555 to 575 (GAIFLGAMFLGLVTHLFNGFA), 610 to 630 (IPISFLECAVWICMTYYVMGF), 642 to 662 (VLLVLISQMASGLFRLLAALG), 667 to 687 (VADTFGSFAQLILLVLGGFLI), and 754 to 774 (IGVGALLGYIMLFNILFILFL). Residues 846-1098 (ITFDNIRYSV…HLINYFEGIQ (253 aa)) form the ABC transporter 2 domain. 891 to 898 (GVSGAGKT) contacts ATP. Residues 1171-1385 (TQCMACLWKQ…TLYGLVASQY (215 aa)) enclose the ABC transmembrane type-2 2 domain. The next 7 helical transmembrane spans lie at 1192–1212 (ATRIFFTTVIALIFGTIFLNL), 1220–1240 (LDLFNSLGSMYAAVLFIGIQN), 1278–1298 (IPHIFLQTVVYGLIVYSLIGF), 1305–1325 (FFWYMFFMFFTFMYFTFYGMM), 1335–1355 (IAAIVSTAFYCIWNIFAGFLI), 1362–1382 (IWWRWYSWACPVAWTLYGLVA), and 1414–1434 (LGYVATAVVGFAALFAFVFAF).

It belongs to the ABC transporter superfamily. ABCG family. PDR (TC 3.A.1.205) subfamily.

It localises to the membrane. In terms of biological role, may be a general defense protein. In Oryza sativa subsp. japonica (Rice), this protein is ABC transporter G family member 39.